The chain runs to 588 residues: WD repeat-containing protein DDB_G0349043 (588 aa).

Positions 1 to 32 are disordered; the sequence is MPLDNKVQLNENGKEVNNNNNNDEDLKIQDNH. Residues 40–72 form the LisH domain; that stretch reads NRSELVRLLIQSLNSLGYDKSAEFLEKDSGISL. A CTLH domain is found at 73–129; that stretch reads QSKEINQFSECVVSGDWNKVEELLPFLKLNEFDTNNVKFLVYSQKFLEYLENHKIKE. WD repeat units lie at residues 244–283, 294–333, and 336–375; these read KHRDEIWFITFSHDGQRLASSSKDNTIIIWDMSTIYLDQP, GHTKEVSHLSWSPNDKYLLSASNDSTVKLWNTNDGTLLKT, and KHSDAVTCCGWHPDNKRFVSGGNDKNIYLWSIENLDLTNS. The interval 376-403 is disordered; it reads NNNNNNHNNNNSNINGNSINGSNNNGNN. WD repeat units lie at residues 413-452, 455-494, 499-539, and 542-582; these read WACARVNDLSIHKDGKQLIIICQEKKLRIYDLENEKTPEV, METDAITSMELSNDCNFALVNTSNQEIHLWDLEKQIIVQK, KQGR…LLET, and RHSG…NSFI.

This chain is WD repeat-containing protein DDB_G0349043, found in Dictyostelium discoideum (Social amoeba).